The following is a 390-amino-acid chain: uncharacterized protein (390 aa).

Helical transmembrane passes span 4–24, 40–60, 68–88, 98–118, 130–150, 159–179, 205–225, 236–256, 273–293, 295–315, 329–349, and 356–376; these read IWLF…LSPL, GWMV…AGPI, TVML…GIAP, FAAG…IPVI, IATA…GFLA, FVLS…MPGI, VILL…SFLG, VSQI…GSLI, GMLL…LFLV, AGFF…MGVF, LSNA…GFLY, and GAVT…YQTI.

It belongs to the major facilitator superfamily.

It localises to the cell membrane. This is an uncharacterized protein from Bacillus subtilis (strain 168).